The primary structure comprises 154 residues: MAASDIAGRVEEMARPLAERKGLELVEVQYVTEGGRRYLRVFLDKPGGINLDDCEAVSRELDRALDDVDFIPHSYVLEVSSPGLERPLKRAEDYVRFKGRLVQINTYAPLNGRKKFSGRLMGSGEEGVTILLGEHELATIPWDQISKARLAVEF.

Belongs to the RimP family.

The protein localises to the cytoplasm. Functionally, required for maturation of 30S ribosomal subunits. This Desulforudis audaxviator (strain MP104C) protein is Ribosome maturation factor RimP.